The primary structure comprises 313 residues: 4-diphosphocytidyl-2-C-methyl-D-erythritol kinase (313 aa).

K27 is an active-site residue. Residue 110 to 120 participates in ATP binding; that stretch reads PIGGGVGGGSS. The active site involves D152.

It belongs to the GHMP kinase family. IspE subfamily.

It catalyses the reaction 4-CDP-2-C-methyl-D-erythritol + ATP = 4-CDP-2-C-methyl-D-erythritol 2-phosphate + ADP + H(+). It participates in isoprenoid biosynthesis; isopentenyl diphosphate biosynthesis via DXP pathway; isopentenyl diphosphate from 1-deoxy-D-xylulose 5-phosphate: step 3/6. Functionally, catalyzes the phosphorylation of the position 2 hydroxy group of 4-diphosphocytidyl-2C-methyl-D-erythritol. The protein is 4-diphosphocytidyl-2-C-methyl-D-erythritol kinase of Histophilus somni (strain 2336) (Haemophilus somnus).